Reading from the N-terminus, the 464-residue chain is Glycine receptor subunit alpha-3 (464 aa).

A signal peptide spans 1 to 33 (MAHVRHFRTLVSGFYFWEAALLLSLVATKETDS). Residues 34-255 (ARSRSAPMSP…RFHLERQMGY (222 aa)) lie on the Extracellular side of the membrane. The N-linked (GlcNAc...) asparagine glycan is linked to Asn71. A disulfide bridge connects residues Cys171 and Cys185. The Zn(2+) site is built by Glu225 and Asp227. A disulfide bond links Cys231 and Cys242. 235-240 (YNTGKF) serves as a coordination point for strychnine. His248 is a Zn(2+) binding site. A helical transmembrane segment spans residues 256 to 277 (YLIQMYIPSLLIVILSWVSFWI). The Cytoplasmic segment spans residues 278 to 282 (NMDAA). The chain crosses the membrane as a helical span at residues 283–303 (PARVALGITTVLTMTTQSSGS). At 304–314 (RASLPKVSYVK) the chain is on the extracellular side. The helical transmembrane segment at 315–335 (AIDIWMAVCLLFVFSALLEYA) threads the bilayer. Residues 336–430 (AVNFVSRQHK…FIDRAKKIDT (95 aa)) are Cytoplasmic-facing. A phosphoserine mark is found at Ser370 and Ser379. A helical membrane pass occupies residues 431–451 (ISRACFPLAFLIFNIFYWVIY). The Extracellular segment spans residues 452-464 (KILRHEDIHQQQD).

This sequence belongs to the ligand-gated ion channel (TC 1.A.9) family. Glycine receptor (TC 1.A.9.3) subfamily. GLRA3 sub-subfamily. As to quaternary structure, homopentamer (in vitro). Heteropentamer composed of GLRA3 and GLRB. Both homopentamers and heteropentamers form functional ion channels, but their characteristics are subtly different. Post-translationally, phosphorylated by PKA; this causes down-regulation of channel activity. As to expression, widely distributed throughout the central nervous system.

It is found in the postsynaptic cell membrane. The protein localises to the perikaryon. The protein resides in the cell projection. It localises to the dendrite. Its subcellular location is the synapse. It is found in the cell membrane. The catalysed reaction is chloride(in) = chloride(out). Its function is as follows. Glycine receptors are ligand-gated chloride channels. Channel opening is triggered by extracellular glycine. Channel characteristics depend on the subunit composition; heteropentameric channels display faster channel closure. Plays an important role in the down-regulation of neuronal excitability. Contributes to the generation of inhibitory postsynaptic currents. Contributes to increased pain perception in response to increased prostaglandin E2 levels. Plays a role in cellular responses to ethanol. This chain is Glycine receptor subunit alpha-3 (GLRA3), found in Homo sapiens (Human).